Here is a 399-residue protein sequence, read N- to C-terminus: S-adenosylmethionine synthase (399 aa).

His15 is a binding site for ATP. Position 17 (Asp17) interacts with Mg(2+). Position 43 (Glu43) interacts with K(+). Residues Glu56 and Gln99 each coordinate L-methionine. Residues 99-109 (QSPDIADGVDH) form a flexible loop region. ATP is bound by residues 175-177 (DAK), 242-243 (RF), Asp251, 257-258 (RK), Ala274, and Lys278. An L-methionine-binding site is contributed by Asp251. L-methionine is bound at residue Lys282.

Belongs to the AdoMet synthase family. As to quaternary structure, homotetramer; dimer of dimers. The cofactor is Mg(2+). Requires K(+) as cofactor.

It is found in the cytoplasm. The catalysed reaction is L-methionine + ATP + H2O = S-adenosyl-L-methionine + phosphate + diphosphate. It participates in amino-acid biosynthesis; S-adenosyl-L-methionine biosynthesis; S-adenosyl-L-methionine from L-methionine: step 1/1. Functionally, catalyzes the formation of S-adenosylmethionine (AdoMet) from methionine and ATP. The overall synthetic reaction is composed of two sequential steps, AdoMet formation and the subsequent tripolyphosphate hydrolysis which occurs prior to release of AdoMet from the enzyme. This Lactobacillus acidophilus (strain ATCC 700396 / NCK56 / N2 / NCFM) protein is S-adenosylmethionine synthase.